The chain runs to 1034 residues: FERM domain-containing protein 4B (1034 aa).

The 303-residue stretch at 59–361 (RHCQVHLLDD…SQHQFYLDRK (303 aa)) folds into the FERM domain. A Phosphoserine modification is found at S372. Coiled coils occupy residues 417 to 450 (EVSE…ELKK) and 531 to 561 (KKKR…RCGK). A necessary for adherens junction and tight junction localization region spans residues 542-971 (MKKLQEIENA…TQLTIGLSDY (430 aa)). Residues 576–589 (PSESSSLSDTTTYD) show a composition bias toward low complexity. Disordered regions lie at residues 576–614 (PSES…ILPP), 635–698 (DTRQ…LESQ), 712–735 (FSLS…YTSQ), and 752–786 (TTQT…AQKD). Residue S608 is modified to Phosphoserine. Polar residues-rich tracts occupy residues 635 to 650 (DTRQ…SSPY) and 663 to 674 (MPTTPVLTRNAY). Over residues 675–685 (SSSHLEPESSS) the composition is skewed to low complexity. Phosphoserine is present on S697. The segment covering 713–722 (SLSKSQRSSS) has biased composition (low complexity). Residues 769–781 (QNVSTSNSGSMPN) are compositionally biased toward polar residues. Residue K882 forms a Glycyl lysine isopeptide (Lys-Gly) (interchain with G-Cter in SUMO2) linkage. Disordered stretches follow at residues 905 to 925 (RASG…SDRG) and 1004 to 1034 (DGTD…GTLV). A compositionally biased stretch (polar residues) spans 906-920 (ASGQKDQGHSPQTSF). Residue S915 is modified to Phosphoserine. The segment covering 1018–1034 (SEQRLFWHEDSKPGTLV) has biased composition (basic and acidic residues). K1029 participates in a covalent cross-link: Glycyl lysine isopeptide (Lys-Gly) (interchain with G-Cter in SUMO2).

As to quaternary structure, interacts with CYTH3. Interacts with PARD3. Interacts with CYTH1.

It is found in the cytoplasm. It localises to the cytoskeleton. The protein localises to the cell junction. Its subcellular location is the tight junction. The protein resides in the adherens junction. Its function is as follows. Member of GRP1 signaling complexes that are acutely recruited to plasma membrane ruffles in response to insulin receptor signaling. May function as a scaffolding protein that regulates epithelial cell polarity by connecting ARF6 activation with the PAR3 complex. Plays a redundant role with FRMD4A in epithelial polarization. The protein is FERM domain-containing protein 4B of Homo sapiens (Human).